The sequence spans 1061 residues: Error-prone DNA polymerase (1061 aa).

It belongs to the DNA polymerase type-C family. DnaE2 subfamily.

It localises to the cytoplasm. The enzyme catalyses DNA(n) + a 2'-deoxyribonucleoside 5'-triphosphate = DNA(n+1) + diphosphate. DNA polymerase involved in damage-induced mutagenesis and translesion synthesis (TLS). It is not the major replicative DNA polymerase. The polypeptide is Error-prone DNA polymerase (Bdellovibrio bacteriovorus (strain ATCC 15356 / DSM 50701 / NCIMB 9529 / HD100)).